The primary structure comprises 152 residues: Transcriptional regulator MraZ (152 aa).

SpoVT-AbrB domains are found at residues 5–52 (ATLV…PLPE) and 81–124 (ASEC…DETT).

The protein belongs to the MraZ family. Forms oligomers.

The protein resides in the cytoplasm. The protein localises to the nucleoid. Functionally, negatively regulates its own expression and that of the subsequent genes in the proximal part of the division and cell wall (dcw) gene cluster. Acts by binding directly to DNA. May also regulate the expression of genes outside the dcw cluster. This is Transcriptional regulator MraZ from Escherichia fergusonii (strain ATCC 35469 / DSM 13698 / CCUG 18766 / IAM 14443 / JCM 21226 / LMG 7866 / NBRC 102419 / NCTC 12128 / CDC 0568-73).